The sequence spans 297 residues: MAKVSELYDVTWEEMRDKMRKWREENSRNSEQIVEVGEELINEYASKLGDDIWIIYEQVMIAALDYGRDDLALFCLQELRRQFPGSHRVKRLTGMRFEAMERYDDAIQLYDRILQEDPTNTAARKRKIAIRKAQGKNVEAIRELNEYLEQFVGDQEAWHELAELYINEHDYAKAAFCLEELMMTNPHNHLYCQQYAEVKYTQGGLENLELSRKYFAQALKLNNRNMRALFGLYMSASHIASNPKASAKTKKDNMKYASWAASQINRAYQFAGRSKKETKYSLKAVEDMLETLQITQS.

Position 2 is an N-acetylalanine (alanine 2). TPR repeat units follow at residues 87–120, 155–188, and 192–225; these read HRVK…DPTN, QEAW…NPHN, and CQQY…NNRN. The residue at position 255 (lysine 255) is an N6-acetyllysine.

This sequence belongs to the EMC2 family. As to quaternary structure, component of the ER membrane protein complex (EMC). Interacts with WNK1 (via amphipathic alpha-helix region); promoting the ER membrane protein complex assembly by preventing EMC2 ubiquitination. Post-translationally, ubiquitinated when soluble in the cytoplasm, leading to its degradation by the proteasome. Interaction with EMC2 prevents its ubiquitination and degradation.

It is found in the endoplasmic reticulum membrane. Its function is as follows. Part of the endoplasmic reticulum membrane protein complex (EMC) that enables the energy-independent insertion into endoplasmic reticulum membranes of newly synthesized membrane proteins. Preferentially accommodates proteins with transmembrane domains that are weakly hydrophobic or contain destabilizing features such as charged and aromatic residues. Involved in the cotranslational insertion of multi-pass membrane proteins in which stop-transfer membrane-anchor sequences become ER membrane spanning helices. It is also required for the post-translational insertion of tail-anchored/TA proteins in endoplasmic reticulum membranes. By mediating the proper cotranslational insertion of N-terminal transmembrane domains in an N-exo topology, with translocated N-terminus in the lumen of the ER, controls the topology of multi-pass membrane proteins like the G protein-coupled receptors. By regulating the insertion of various proteins in membranes, it is indirectly involved in many cellular processes. The protein is ER membrane protein complex subunit 2 of Homo sapiens (Human).